Consider the following 372-residue polypeptide: NAD(P)H-quinone oxidoreductase subunit 1 (372 aa).

8 consecutive transmembrane segments (helical) span residues 27–47 (AIWM…GVLV), 97–117 (WLFL…YLIV), 130–150 (VGIF…LMAG), 176–196 (LALS…IDIV), 204–224 (ILGW…IAAL), 254–274 (FALF…VFAV), 308–328 (SLGI…AILL), and 351–371 (VSLV…FAFG).

The protein belongs to the complex I subunit 1 family. NDH-1 is composed of at least 11 different subunits.

The protein localises to the cellular thylakoid membrane. The enzyme catalyses a plastoquinone + NADH + (n+1) H(+)(in) = a plastoquinol + NAD(+) + n H(+)(out). It catalyses the reaction a plastoquinone + NADPH + (n+1) H(+)(in) = a plastoquinol + NADP(+) + n H(+)(out). Its function is as follows. NDH-1 shuttles electrons from an unknown electron donor, via FMN and iron-sulfur (Fe-S) centers, to quinones in the respiratory and/or the photosynthetic chain. The immediate electron acceptor for the enzyme in this species is believed to be plastoquinone. Couples the redox reaction to proton translocation, and thus conserves the redox energy in a proton gradient. The chain is NAD(P)H-quinone oxidoreductase subunit 1 from Microcystis aeruginosa (strain NIES-843 / IAM M-2473).